We begin with the raw amino-acid sequence, 59 residues long: Kunitz-type serine protease inhibitor LmKTT-1c (59 aa).

Residues 4–54 (CQLPSDVGKGKASFTRYFYNEESGKCETFIYGGMGGNSNNFLTKEACCREC) form the BPTI/Kunitz inhibitor domain. Intrachain disulfides connect Cys-4–Cys-54, Cys-29–Cys-50, and Cys-51–Cys-59.

The protein belongs to the venom Kunitz-type family. Scorpion delta-Ktx subfamily. Delta-Ktx 2 sub-subfamily. Expressed by the venom gland.

It localises to the secreted. Serine protease inhibitor that inhibits trypsin at a molar ratio of 1:1 (Ki=124 nM). The sequence is that of Kunitz-type serine protease inhibitor LmKTT-1c from Lychas mucronatus (Chinese swimming scorpion).